The following is a 320-amino-acid chain: o-succinylbenzoate synthase (320 aa).

K133 (proton donor) is an active-site residue. Mg(2+) is bound by residues D161, E190, and D213. Catalysis depends on K235, which acts as the Proton acceptor.

It belongs to the mandelate racemase/muconate lactonizing enzyme family. MenC type 1 subfamily. The cofactor is a divalent metal cation.

The catalysed reaction is (1R,6R)-6-hydroxy-2-succinyl-cyclohexa-2,4-diene-1-carboxylate = 2-succinylbenzoate + H2O. Its pathway is quinol/quinone metabolism; 1,4-dihydroxy-2-naphthoate biosynthesis; 1,4-dihydroxy-2-naphthoate from chorismate: step 4/7. It participates in quinol/quinone metabolism; menaquinone biosynthesis. Converts 2-succinyl-6-hydroxy-2,4-cyclohexadiene-1-carboxylate (SHCHC) to 2-succinylbenzoate (OSB). This Escherichia coli O7:K1 (strain IAI39 / ExPEC) protein is o-succinylbenzoate synthase.